The following is a 351-amino-acid chain: Ribosomal RNA large subunit methyltransferase M (351 aa).

Residues S186, 219–222 (APGG), D238, D258, and D274 contribute to the S-adenosyl-L-methionine site. K303 (proton acceptor) is an active-site residue.

It belongs to the class I-like SAM-binding methyltransferase superfamily. RNA methyltransferase RlmE family. RlmM subfamily. In terms of assembly, monomer.

Its subcellular location is the cytoplasm. The catalysed reaction is cytidine(2498) in 23S rRNA + S-adenosyl-L-methionine = 2'-O-methylcytidine(2498) in 23S rRNA + S-adenosyl-L-homocysteine + H(+). In terms of biological role, catalyzes the 2'-O-methylation at nucleotide C2498 in 23S rRNA. This chain is Ribosomal RNA large subunit methyltransferase M, found in Xylella fastidiosa (strain M12).